Consider the following 142-residue polypeptide: Protein OrfX1 (142 aa).

The protein belongs to the TULIP P47 family. As to quaternary structure, orfX1 was not detected as part of a crude toxin extract that includes BoNTA2/NTNH, P47, OrfX2 and OrfX3.

Part of a botulinum neurotoxin type A2 (BoNT) locus; may be part of a progenitor toxin complex required to protect BoNT during its passage through the host gastrointestinal tract. Binds phosphatidylinositol (3,4) bisphosphate, phosphatidylethanolamine and phosphatidylserine. The polypeptide is Protein OrfX1 (orfX1) (Clostridium botulinum (strain Kyoto / Type A2)).